A 414-amino-acid chain; its full sequence is Putative truncated GMC-type inactive oxidoreductase R832 (414 aa).

The first 20 residues, 1 to 20 (MNPTKLFLVFVAFAFAIINA), serve as a signal peptide directing secretion. 38-67 (DYIIVGSGPGGSRAVQQCIAKGHKCTLVER) contributes to the FAD binding site.

This sequence belongs to the GMC oxidoreductase family. The cofactor is FAD.

The protein is Putative truncated GMC-type inactive oxidoreductase R832 of Acanthamoeba polyphaga (Amoeba).